Consider the following 258-residue polypeptide: Global transcriptional regulator CodY (258 aa).

The interval 1–156 (MSSLLTKTRM…SATIVGMEML (156 aa)) is GAF domain. Positions 204 to 223 (ASKIADKVGITRSVIVNALR) form a DNA-binding region, H-T-H motif.

This sequence belongs to the CodY family.

The protein resides in the cytoplasm. In terms of biological role, DNA-binding global transcriptional regulator which is involved in the adaptive response to starvation and acts by directly or indirectly controlling the expression of numerous genes in response to nutrient availability. During rapid exponential growth, CodY is highly active and represses genes whose products allow adaptation to nutrient depletion. In Clostridium beijerinckii (strain ATCC 51743 / NCIMB 8052) (Clostridium acetobutylicum), this protein is Global transcriptional regulator CodY.